The chain runs to 265 residues: Type 1 encapsulin shell protein (265 aa).

FMN-binding positions include 79–81 (RAT), Trp-87, and 90–94 (DNLER). Residues 184-189 (EAGHYP) form a pore-forming loop region. Glu-235 lines the FMN pocket.

This sequence belongs to the encapsulin family. Family 1 subfamily. As to quaternary structure, homomultimeric. This encapsulin nanocompartment is formed by 60 subunits; monomers form 12 pentamers which assemble to form shells. There are 12 pores where the pentamers meet as well as 3-fold axis channels and dimer channels; none are larger than 3-4 Angstroms in diameter. The N-terminus of the protein is inside the shell, the C-terminus is outside. Probably 3, 4 or 5 Flp cargo decamers bind inside the encapulin nanocompartment. FMN serves as cofactor.

Its subcellular location is the encapsulin nanocompartment. Its activity is regulated as follows. Proteolysis activated by calcium and cobalt. Functionally, shell component of a type 1 encapsulin nanocompartment. Assembles into proteinaceous shells 23-24 nm in diameter with 2-2.5 nm thick walls. Cargo protein Flp (ferritin-like protein, probably stores iron) is targeted to the interior via its C-terminal extension; empty intact shells can be isolated in the absence of cargo protein. Fe(2+) may be able to pass though the 5-fold and dimer channels in the protein shell. Protease that exhibits activity toward chymotrypsin and trypsin substrates. Probably does not have antibacterial activity. The sequence is that of Type 1 encapsulin shell protein from Thermotoga maritima (strain ATCC 43589 / DSM 3109 / JCM 10099 / NBRC 100826 / MSB8).